The primary structure comprises 312 residues: Small kinetochore-associated protein (312 aa).

Residues 1–171 are disordered; it reads MAAPEAEAQE…PFNKQKPEEE (171 aa). Residues 131–143 show a composition bias toward basic and acidic residues; that stretch reads DVTKVTKSRRENG. Residues 156-312 form an interaction with SPAG5 region; sequence LRNSYKPFNK…LEEMEQLLEM (157 aa). Coiled coils occupy residues 166–210 and 246–287; these read QKPE…LEKF and LLET…QFLE.

In terms of assembly, part of an astrin (SPAG5)-kinastrin (SKAP) complex containing KNSTRN, SPAG5, PLK1, DYNLL1 and SGO2A. Interacts with SPAG5. Directly binds to microtubules, although at relatively low affinity. Interacts with CENPE; this interaction greatly favors microtubule-binding. Interacts with DSN1/MIS13; leading to localization to kinetochores. Interacts with MAPRE1/EB1; leading to localization to the microtubule plus ends. Interacts with PRPF19. Interacts with DYNLL1. Interacts with MAP4.

It is found in the nucleus. The protein resides in the chromosome. The protein localises to the centromere. Its subcellular location is the kinetochore. It localises to the cytoplasm. It is found in the cytoskeleton. The protein resides in the spindle pole. The protein localises to the microtubule organizing center. Essential component of the mitotic spindle required for faithful chromosome segregation and progression into anaphase. Promotes the metaphase-to-anaphase transition and is required for chromosome alignment, normal timing of sister chromatid segregation, and maintenance of spindle pole architecture. The astrin (SPAG5)-kinastrin (SKAP) complex promotes stable microtubule-kinetochore attachments. Required for kinetochore oscillations and dynamics of microtubule plus-ends during live cell mitosis, possibly by forming a link between spindle microtubule plus-ends and mitotic chromosomes to achieve faithful cell division. The protein is Small kinetochore-associated protein (Knstrn) of Mus musculus (Mouse).